The primary structure comprises 701 residues: Reverse gyrase subunit A (701 aa).

One can recognise a Toprim domain in the interval 41–197 (MVLFIVESPN…NIYRAEFHEV (157 aa)). Glutamate 47 serves as a coordination point for Mg(2+). The segment at 117-143 (IKKCLDCGHQFVDEDKCPRCGSENIDD) adopts an RG C-terminal-type zinc-finger fold. 4 residues coordinate Zn(2+): cysteine 120, cysteine 123, cysteine 133, and cysteine 136. Aspartate 166 is a binding site for Mg(2+). In terms of domain architecture, Topo IA-type catalytic spans 213-602 (NTNRVKAQLV…SFKKELIEIW (390 aa)). The active-site O-(5'-phospho-DNA)-tyrosine intermediate is tyrosine 352.

This sequence belongs to the type IA topoisomerase family. As to quaternary structure, heterodimer of an RgyA and RgyB subunit. Zn(2+) serves as cofactor. It depends on Mg(2+) as a cofactor.

It localises to the cytoplasm. Modifies the topological state of DNA by introducing positive supercoils in an ATP-dependent process. Binds to single-stranded DNA, transiently cleaves and then rejoins the end, introducing a positive supercoil in the process. The scissile phosphodiester is attacked by the catalytic tyrosine of the enzyme, resulting in the formation of a DNA-(5'-phosphotyrosyl)-enzyme intermediate. Probably involved in rewinding DNA strands in regions of the chromosome that have opened up to allow replication, transcription, DNA repair or for DNA protection. Reconstituted holoenzyme binds dsDNA a bit better than ssDNA, this subunit preferentially binds ssDNA. In isolation this subunit relaxes negatively-supercoiled DNA, and stimulates the endogenous ATPase activity of the RgyB subunit. In Nanoarchaeum equitans (strain Kin4-M), this protein is Reverse gyrase subunit A.